A 311-amino-acid chain; its full sequence is Methionyl-tRNA formyltransferase (311 aa).

Residue 110–113 participates in (6S)-5,6,7,8-tetrahydrofolate binding; sequence SLLP.

This sequence belongs to the Fmt family.

The catalysed reaction is L-methionyl-tRNA(fMet) + (6R)-10-formyltetrahydrofolate = N-formyl-L-methionyl-tRNA(fMet) + (6S)-5,6,7,8-tetrahydrofolate + H(+). Its function is as follows. Attaches a formyl group to the free amino group of methionyl-tRNA(fMet). The formyl group appears to play a dual role in the initiator identity of N-formylmethionyl-tRNA by promoting its recognition by IF2 and preventing the misappropriation of this tRNA by the elongation apparatus. This Streptococcus pyogenes serotype M18 (strain MGAS8232) protein is Methionyl-tRNA formyltransferase.